An 805-amino-acid chain; its full sequence is Transcription factor E2f1 (805 aa).

3 disordered regions span residues 9 to 45, 119 to 208, and 224 to 255; these read APIN…TTGH, AAAA…LRHD, and PASH…RNRA. 2 stretches are compositionally biased toward low complexity: residues 12–37 and 119–134; these read NNSN…QQHY and AAAA…QLQQ. Polar residues-rich tracts occupy residues 144–154 and 181–195; these read RKATGKSNDIT and HHQT…SSAP. Positions 147–161 match the PIP-box K+4 motif motif; it reads TGKSNDITNYYKVKR. Residues 240–249 show a composition bias toward low complexity; it reads AASVASSSSS. The DNA-binding element occupies 253-318; sequence NRADTSLGIL…KKSKNNIQWR (66 aa). Positions 318-411 are dimerization; it reads RCGQSMVSQE…LPNTKLPREI (94 aa). At Ser434 the chain carries Phosphoserine. Disordered regions lie at residues 578-650 and 714-743; these read SLTE…QRRS and GAGA…DANS. Low complexity-rich tracts occupy residues 595–615 and 623–636; these read AAAA…NSHN and SNHS…NSKS. Polar residues predominate over residues 637–647; the sequence is QPPTIGYGSSQ.

It belongs to the E2F/DP family. In terms of assembly, heterodimer of E2f and Dp. Cooperates to give sequence-specific DNA binding and optimal trans-activation. Interacts with PCNA. Ubiquitinated by the DCX(DTL) complex, also named CRL4(CDT2) complex, leading to its degradation during S phase. Ubiquitination by the DCX(DTL) complex is essential for cell cycle control and is PCNA-dependent: interacts with PCNA via its PIP-box, while the presence of the containing the 'K+4' motif in the PIP box, recruit the DCX(DTL) complex, leading to its degradation. Segmentally repeated expression throughout early embryos is restricted to the ventral nerve cord in later embryos.

It localises to the nucleus. Its function is as follows. Transcriptional activator that binds to E2f sites. Required for wild-type growth in mitotic and polytene tissues, Contributes to the expression of replication genes at the G1-S transition and Cyclin E. Activates cell proliferation in wing imaginal disk, which requires expression of vg. The protein is Transcription factor E2f1 of Drosophila melanogaster (Fruit fly).